Consider the following 399-residue polypeptide: Carbamoyl phosphate synthase arginine-specific small chain (399 aa).

One can recognise a Glutamine amidotransferase type-1 domain in the interval 187–379; that stretch reads DVALVDCGVK…VERMRCYRKL (193 aa). The active-site Nucleophile is the cysteine 267. Catalysis depends on residues histidine 352 and glutamate 354.

Belongs to the CarA family. Heterodimer composed of 2 chains; the small (or glutamine) chain promotes the hydrolysis of glutamine to ammonia, which is used by the large (or ammonia) chain to synthesize carbamoyl phosphate.

It is found in the cytoplasm. It catalyses the reaction hydrogencarbonate + L-glutamine + 2 ATP + H2O = carbamoyl phosphate + L-glutamate + 2 ADP + phosphate + 2 H(+). The enzyme catalyses L-glutamine + H2O = L-glutamate + NH4(+). The protein operates within amino-acid biosynthesis; L-arginine biosynthesis; carbamoyl phosphate from bicarbonate: step 1/1. In terms of biological role, small subunit of the arginine-specific carbamoyl phosphate synthase (CPSase). CPSase catalyzes the formation of carbamoyl phosphate from the ammonia moiety of glutamine, carbonate, and phosphate donated by ATP, constituting the first step of 2 biosynthetic pathways, one leading to arginine and/or urea and the other to pyrimidine nucleotides. The small subunit (glutamine amidotransferase) binds and cleaves glutamine to supply the large subunit with the substrate ammonia. The sequence is that of Carbamoyl phosphate synthase arginine-specific small chain (CPA1) from Eremothecium gossypii (strain ATCC 10895 / CBS 109.51 / FGSC 9923 / NRRL Y-1056) (Yeast).